An 870-amino-acid chain; its full sequence is UvrABC system protein B (870 aa).

The 391-residue stretch at 20 to 410 folds into the Helicase ATP-binding domain; that stretch reads EGVDNNDRTQ…VFAEQVIRPT (391 aa). 33–40 serves as a coordination point for ATP; sequence GVTGSGKT. The Beta-hairpin motif lies at 86-109; the sequence is YYDYYQPEAYVPRTDTFIEKESSI. The Helicase C-terminal domain occupies 425–591; sequence QVDDVVGEIR…SVKSRISDIL (167 aa). Residues 620–655 form the UVR domain; it reads KAHLDAMEKQMRDAAANLDFEKAARIRDEIKRLREM. Disordered regions lie at residues 671–698 and 741–870; these read ESPV…QERF and AKPS…RPGK. Basic residues predominate over residues 679-689; it reads KGKHNKGVAKH. 2 stretches are compositionally biased toward basic and acidic residues: residues 793–808 and 827–836; these read NSLD…KPVE and TDVKDRDDSA. Basic residues predominate over residues 858–870; the sequence is EKRRPGKTGRPGK.

This sequence belongs to the UvrB family. As to quaternary structure, forms a heterotetramer with UvrA during the search for lesions. Interacts with UvrC in an incision complex.

It is found in the cytoplasm. The UvrABC repair system catalyzes the recognition and processing of DNA lesions. A damage recognition complex composed of 2 UvrA and 2 UvrB subunits scans DNA for abnormalities. Upon binding of the UvrA(2)B(2) complex to a putative damaged site, the DNA wraps around one UvrB monomer. DNA wrap is dependent on ATP binding by UvrB and probably causes local melting of the DNA helix, facilitating insertion of UvrB beta-hairpin between the DNA strands. Then UvrB probes one DNA strand for the presence of a lesion. If a lesion is found the UvrA subunits dissociate and the UvrB-DNA preincision complex is formed. This complex is subsequently bound by UvrC and the second UvrB is released. If no lesion is found, the DNA wraps around the other UvrB subunit that will check the other stand for damage. The chain is UvrABC system protein B from Mesorhizobium japonicum (strain LMG 29417 / CECT 9101 / MAFF 303099) (Mesorhizobium loti (strain MAFF 303099)).